The chain runs to 147 residues: Transthyretin (147 aa).

The N-terminal stretch at 1 to 20 (MASFRLFLLCLAGLVFVSEA) is a signal peptide. At Cys-30 the chain carries Sulfocysteine. Lys-35 is a binding site for L-thyroxine. The residue at position 62 (Glu-62) is a 4-carboxyglutamate. The residue at position 72 (Ser-72) is a Phosphoserine. Glu-74 contacts L-thyroxine. A glycan (N-linked (GlcNAc...) asparagine) is linked at Asn-118. An L-thyroxine-binding site is contributed by Ser-137.

It belongs to the transthyretin family. As to quaternary structure, homotetramer. Dimer of dimers. In the homotetramer, subunits assemble around a central channel that can accommodate two ligand molecules. Interacts with RBP4. In terms of processing, sulfonation of the reactive cysteine Cys-30 enhances the stability of the native conformation of TTR, avoiding misassembly of the protein leading to amyloid formation. Detected in serum (at protein level).

Its subcellular location is the secreted. In terms of biological role, thyroid hormone-binding protein. Probably transports thyroxine from the bloodstream to the brain. This is Transthyretin (TTR) from Bos taurus (Bovine).